The sequence spans 364 residues: tRNA/tmRNA (uracil-C(5))-methyltransferase (364 aa).

S-adenosyl-L-methionine contacts are provided by Gln-188, Tyr-216, Asn-221, Glu-237, and Asp-297. The Nucleophile role is filled by Cys-322. Glu-356 acts as the Proton acceptor in catalysis.

The protein belongs to the class I-like SAM-binding methyltransferase superfamily. RNA M5U methyltransferase family. TrmA subfamily.

The enzyme catalyses uridine(54) in tRNA + S-adenosyl-L-methionine = 5-methyluridine(54) in tRNA + S-adenosyl-L-homocysteine + H(+). It carries out the reaction uridine(341) in tmRNA + S-adenosyl-L-methionine = 5-methyluridine(341) in tmRNA + S-adenosyl-L-homocysteine + H(+). Its function is as follows. Dual-specificity methyltransferase that catalyzes the formation of 5-methyluridine at position 54 (m5U54) in all tRNAs, and that of position 341 (m5U341) in tmRNA (transfer-mRNA). This is tRNA/tmRNA (uracil-C(5))-methyltransferase from Teredinibacter turnerae (strain ATCC 39867 / T7901).